A 257-amino-acid polypeptide reads, in one-letter code: MNINDKPIGFFDSGVGGISVLKEAFKLLPKEDFLYYGDSKNAPYGTKKVEEVKTLTFNATDFLMNKGIKALVVACNTATSVTINDLRENYDIPIIGIEPALKPAVELKKGGKIIIMATPMTLAEKKFANLMDLYKETEDIEPLPCPGLPELIEQGIVSGDVIYNYLKDKFSKYDNEKISSIVLGCTHYPFIEETLKEVTHNKACIIDGSFGTSRELKRQLKNSNMLREENRVGKVTIFNSREDRDIIDLSYKLFNMK.

Substrate-binding positions include 12-13 (DS) and 44-45 (YG). C75 serves as the catalytic Proton donor/acceptor. 76–77 (NT) lines the substrate pocket. C185 acts as the Proton donor/acceptor in catalysis. Residue 186–187 (TH) coordinates substrate.

It belongs to the aspartate/glutamate racemases family.

It carries out the reaction L-glutamate = D-glutamate. It functions in the pathway cell wall biogenesis; peptidoglycan biosynthesis. Provides the (R)-glutamate required for cell wall biosynthesis. This Clostridium botulinum (strain Loch Maree / Type A3) protein is Glutamate racemase.